Consider the following 257-residue polypeptide: Transmembrane protein 101 (257 aa).

The next 8 helical transmembrane spans lie at 21–40 (VLLT…LYAE), 52–72 (VPYL…MSFG), 77–97 (WFAL…YVGG), 110–130 (YSRT…AGEL), 139–159 (SLQS…AYSL), 182–202 (LFFV…YVTL), 206–226 (ILAV…AYWH), and 233–253 (FWNQ…AVIL).

It is found in the membrane. Its function is as follows. May activate NF-kappa-B signaling pathways. In Bos taurus (Bovine), this protein is Transmembrane protein 101 (TMEM101).